Reading from the N-terminus, the 249-residue chain is Flavin-dependent thymidylate synthase (249 aa).

The region spanning 7-235 (LDVQLIAATA…PVLFDDFHIT (229 aa)) is the ThyX domain. DUMP is bound by residues 94-97 (ELVR), 105-109 (QLSQR), and R174. Residues 97–99 (RHR) and Q105 each bind FAD. The ThyX motif motif lies at 97–107 (RHRHFSFSQLS). FAD is bound by residues 190 to 192 (NYR) and H196. Residue R201 coordinates dUMP. R201 functions as the Involved in ionization of N3 of dUMP, leading to its activation in the catalytic mechanism.

This sequence belongs to the thymidylate synthase ThyX family. In terms of assembly, homotetramer. Requires FAD as cofactor.

It catalyses the reaction dUMP + (6R)-5,10-methylene-5,6,7,8-tetrahydrofolate + NADPH + H(+) = dTMP + (6S)-5,6,7,8-tetrahydrofolate + NADP(+). Its pathway is pyrimidine metabolism; dTTP biosynthesis. Functionally, catalyzes the reductive methylation of 2'-deoxyuridine-5'-monophosphate (dUMP) to 2'-deoxythymidine-5'-monophosphate (dTMP) while utilizing 5,10-methylenetetrahydrofolate (mTHF) as the methyl donor, and NADPH and FADH(2) as the reductant. The chain is Flavin-dependent thymidylate synthase from Corynebacterium aurimucosum (strain ATCC 700975 / DSM 44827 / CIP 107346 / CN-1) (Corynebacterium nigricans).